Consider the following 242-residue polypeptide: Invasion chromosome antigen R (242 aa).

It localises to the secreted. May contribute to pathogenesis, although some of its characteristics suggest it is a fossil gene. In Shigella flexneri serotype 5a (strain M90T), this protein is Invasion chromosome antigen R.